A 164-amino-acid polypeptide reads, in one-letter code: Cyclic pyranopterin monophosphate synthase (164 aa).

Substrate contacts are provided by residues 77–79 (LCH) and 115–116 (ME). The active site involves D130.

Belongs to the MoaC family. In terms of assembly, homohexamer; trimer of dimers.

It carries out the reaction (8S)-3',8-cyclo-7,8-dihydroguanosine 5'-triphosphate = cyclic pyranopterin phosphate + diphosphate. The protein operates within cofactor biosynthesis; molybdopterin biosynthesis. Catalyzes the conversion of (8S)-3',8-cyclo-7,8-dihydroguanosine 5'-triphosphate to cyclic pyranopterin monophosphate (cPMP). The polypeptide is Cyclic pyranopterin monophosphate synthase (Rhizobium meliloti (strain 1021) (Ensifer meliloti)).